Reading from the N-terminus, the 256-residue chain is L-erythrulose-1-phosphate isomerase (256 aa).

The active-site Electrophile is His-96. The active-site Proton acceptor is Glu-169. The substrate site is built by Gly-175 and Ser-212.

The protein belongs to the triosephosphate isomerase family. Homodimer.

The protein resides in the cytoplasm. It carries out the reaction L-erythrulose 1-phosphate = D-erythrulose 4-phosphate. The protein operates within carbohydrate metabolism; erythritol degradation. Its function is as follows. Catalyzes the isomerization of D-erythrulose-4P to L-erythrulose-1P. Involved in the degradation pathway of erythritol, that allows B.abortus to grow on this compound as the sole carbon source. The protein is L-erythrulose-1-phosphate isomerase of Brucella abortus (strain 2308).